A 942-amino-acid chain; its full sequence is Netrin receptor UNC5B-b (942 aa).

The signal sequence occupies residues 1–30 (MYLSRIPGGAALAALLVALLLCCNFPPSIA). Residues 31–380 (GIEYSDVLPD…LESTGDVALY (350 aa)) lie on the Extracellular side of the membrane. Residues 51-148 (PHFLLEPEDA…AGTTKSKRSY (98 aa)) form the Ig-like domain. 9 disulfides stabilise this stretch: cysteine 72-cysteine 133, cysteine 84-cysteine 131, cysteine 177-cysteine 228, cysteine 261-cysteine 298, cysteine 265-cysteine 302, cysteine 276-cysteine 288, cysteine 317-cysteine 351, cysteine 321-cysteine 356, and cysteine 329-cysteine 341. Residues 150 to 245 (RIAYLRKNFD…KRRSTTATVI (96 aa)) enclose the Ig-like C2-type domain. Residue asparagine 225 is glycosylated (N-linked (GlcNAc...) asparagine). TSP type-1 domains follow at residues 249–303 (NGGW…TMCP) and 305–357 (DGGW…GLCM). A glycan (N-linked (GlcNAc...) asparagine) is linked at asparagine 350. A helical membrane pass occupies residues 381 to 401 (AGLVVAIFIIIILLMAVGIVV). Over 402–942 (YRRNCREFDT…MLVMATDGDC (541 aa)) the chain is Cytoplasmic. The ZU5 domain maps to 541–684 (NSVTGTFGSL…LGTYAFVGES (144 aa)). The tract at residues 687–835 (RSAIKRLQLA…LEENVKSFDP (149 aa)) is UPA domain. The region spanning 863–940 (ICNSLDAPNS…EMMLVMATDG (78 aa)) is the Death domain.

It belongs to the unc-5 family. As to quaternary structure, interacts (via extracellular domain) with flrt3 (via extracellular domain). Interacts with rnd1.

The protein resides in the cell membrane. In terms of biological role, plays a role in cell-cell adhesion during embryonic development. Receptor for netrin required for axon guidance. Mediates axon repulsion of neuronal growth cones in the developing nervous system upon ligand binding. The protein is Netrin receptor UNC5B-b of Xenopus laevis (African clawed frog).